The chain runs to 225 residues: Cytidylate kinase (225 aa).

12–20 is an ATP binding site; sequence GPSGAGKGT.

It belongs to the cytidylate kinase family. Type 1 subfamily.

The protein localises to the cytoplasm. It catalyses the reaction CMP + ATP = CDP + ADP. The catalysed reaction is dCMP + ATP = dCDP + ADP. The polypeptide is Cytidylate kinase (Pectobacterium atrosepticum (strain SCRI 1043 / ATCC BAA-672) (Erwinia carotovora subsp. atroseptica)).